The chain runs to 257 residues: Gamma-secretase subunit APH-1B (257 aa).

7 consecutive transmembrane segments (helical) span residues 5 to 25, 32 to 52, 66 to 86, 115 to 135, 160 to 180, 186 to 206, and 213 to 233; these read VFFG…VFTI, VIFL…SSVF, PVQN…QELF, LLAY…SFVN, AFMT…FFDG, WYTL…TFLS, and LVTA…VAGG.

It belongs to the APH-1 family. Probable component of the gamma-secretase complex, a complex composed of a presenilin homodimer (PSEN1 or PSEN2), nicastrin (NCSTN), APH1 (APH1A or APH1B) and PEN2. Such minimal complex is sufficient for secretase activity, although other components may exist. Interacts with PSEN1 and PSEN2.

Its subcellular location is the membrane. In terms of biological role, probable subunit of the gamma-secretase complex, an endoprotease complex that catalyzes the intramembrane cleavage of integral proteins such as Notch receptors and APP (amyloid-beta precursor protein). It probably represents a stabilizing cofactor for the presenilin homodimer that promotes the formation of a stable complex. Probably present in a minority of gamma-secretase complexes compared to APH1A. In Mus musculus (Mouse), this protein is Gamma-secretase subunit APH-1B (Aph1b).